The chain runs to 1180 residues: Neurexin like receptor 1 (1180 aa).

The signal sequence occupies residues 1-20; the sequence is MSGLCLVLLLSIFAVSQSSG. Residues 21–1108 are Extracellular-facing; it reads ECSDVSFSSV…SQNKQDLVSK (1088 aa). One can recognise a Laminin G-like 1 domain in the interval 124–290; sequence PITAFDDSSY…LSPNEVHNQC (167 aa). Residue Asn-229 is glycosylated (N-linked (GlcNAc...) asparagine). A disulfide bridge links Cys-267 with Cys-290. 4 N-linked (GlcNAc...) asparagine glycosylation sites follow: Asn-302, Asn-336, Asn-355, and Asn-436. An EGF-like 1 domain is found at 444-481; it reads FQEKCLPNPCENGGGCVQSALDDYVCNCKEGYKGKNCH. 3 disulfide bridges follow: Cys-448–Cys-459, Cys-453–Cys-469, and Cys-471–Cys-480. N-linked (GlcNAc...) asparagine glycans are attached at residues Asn-522 and Asn-636. A Laminin G-like 2 domain is found at 695-863; that stretch reads TFDPVTFSNR…GVAIGDDGYC (169 aa). The 38-residue stretch at 859–896 folds into the EGF-like 2 domain; it reads DDGYCRPDLCQNGGQCVDKYDGYVCDCSMTPFGGSDCT. 3 disulfides stabilise this stretch: Cys-863/Cys-874, Cys-868/Cys-883, and Cys-885/Cys-895. Asn-933, Asn-949, Asn-978, Asn-997, Asn-1011, and Asn-1052 each carry an N-linked (GlcNAc...) asparagine glycan. The helical transmembrane segment at 1109–1129 threads the bilayer; it reads AIIGGGILALSLFILCMSSLI. Residues 1130 to 1180 lie on the Cytoplasmic side of the membrane; the sequence is CYMRSRPEGVYKTNETGENCSPSRSEEPLVHNTTSNNNNNPTYASNKEYFC. The span at 1142–1152 shows a compositional bias: polar residues; it reads TNETGENCSPS. Residues 1142–1180 form a disordered region; that stretch reads TNETGENCSPSRSEEPLVHNTTSNNNNNPTYASNKEYFC. Residues 1161–1171 show a composition bias toward low complexity; sequence NTTSNNNNNPT.

The protein belongs to the neurexin family. Interacts (via the intracellular domain) with F-actin; the interaction is required for anchoring F-actin at the membrane for gap junction formation. In terms of tissue distribution, highly expressed in pharyngeal g1 and g2 gland cells, pharyngeal muscle cells and the unilateral GABAergic RIS interneuron (at protein level). Expressed in pm5 pharyngeal muscle cells and the nerve ring.

Its subcellular location is the cell membrane. The protein localises to the cell junction. It localises to the gap junction. Its function is as follows. Required for gap junction formation, playing a role in anchoring the cytoskeletal component F-actin to the membrane of adjacent cells and thus facilitating the formation of gap junction channels in embryonic cells, muscle cells and neuronal cells. Plays a role in maintaining gap junction activity to promote pharyngeal muscle contraction. The sequence is that of Neurexin like receptor 1 from Caenorhabditis elegans.